The chain runs to 167 residues: Alpha-crystallin A chain (167 aa).

Position 1 is an N-acetylmethionine (methionine 1). The sHSP domain occupies 47–158 (YYRQSFFRGF…GERPIPVSRE (112 aa)). Histidine 94, glutamate 96, histidine 101, and histidine 148 together coordinate Zn(2+). The interval 143 to 167 (SLDSSHGERPIPVSREEKPTSAPSS) is disordered. A compositionally biased stretch (basic and acidic residues) spans 147–161 (SHGERPIPVSREEKP). The O-linked (GlcNAc) serine glycan is linked to serine 156.

It belongs to the small heat shock protein (HSP20) family. In terms of assembly, heteropolymer composed of three CRYAA and one CRYAB subunits. Inter-subunit bridging via zinc ions enhances stability, which is crucial as there is no protein turn over in the lens. Can also form homodimers and homotetramers (dimers of dimers) which serve as the building blocks of homooligomers. Within homooligomers, the zinc-binding motif is created from residues of 3 different molecules. His-94 and Glu-96 from one molecule are ligands of the zinc ion, and His-101 and His-148 residues from additional molecules complete the site with tetrahedral coordination geometry.

The protein resides in the cytoplasm. The protein localises to the nucleus. Its function is as follows. Contributes to the transparency and refractive index of the lens. May act as a chaperone, preventing aggregation of various proteins under a wide range of stress conditions. In Pelophylax lessonae (Pool frog), this protein is Alpha-crystallin A chain (CRYAA).